Here is a 194-residue protein sequence, read N- to C-terminus: Imidazoleglycerol-phosphate dehydratase (194 aa).

The protein belongs to the imidazoleglycerol-phosphate dehydratase family.

Its subcellular location is the cytoplasm. It carries out the reaction D-erythro-1-(imidazol-4-yl)glycerol 3-phosphate = 3-(imidazol-4-yl)-2-oxopropyl phosphate + H2O. The protein operates within amino-acid biosynthesis; L-histidine biosynthesis; L-histidine from 5-phospho-alpha-D-ribose 1-diphosphate: step 6/9. In Oceanobacillus iheyensis (strain DSM 14371 / CIP 107618 / JCM 11309 / KCTC 3954 / HTE831), this protein is Imidazoleglycerol-phosphate dehydratase.